The primary structure comprises 424 residues: Gamma-glutamyl phosphate reductase (424 aa).

This sequence belongs to the gamma-glutamyl phosphate reductase family.

The protein resides in the cytoplasm. The enzyme catalyses L-glutamate 5-semialdehyde + phosphate + NADP(+) = L-glutamyl 5-phosphate + NADPH + H(+). It participates in amino-acid biosynthesis; L-proline biosynthesis; L-glutamate 5-semialdehyde from L-glutamate: step 2/2. Catalyzes the NADPH-dependent reduction of L-glutamate 5-phosphate into L-glutamate 5-semialdehyde and phosphate. The product spontaneously undergoes cyclization to form 1-pyrroline-5-carboxylate. The polypeptide is Gamma-glutamyl phosphate reductase (Shewanella woodyi (strain ATCC 51908 / MS32)).